A 402-amino-acid chain; its full sequence is Argininosuccinate synthase (402 aa).

Residues 9-17 (AYSGGLDTS) and Ala-36 contribute to the ATP site. Tyr-87 and Ser-92 together coordinate L-citrulline. Gly-117 is a binding site for ATP. The L-aspartate site is built by Thr-119, Asn-123, and Asp-124. Position 123 (Asn-123) interacts with L-citrulline. L-citrulline is bound by residues Arg-127, Ser-176, Ser-185, Glu-261, and Tyr-273.

Belongs to the argininosuccinate synthase family. Type 1 subfamily. As to quaternary structure, homotetramer.

It localises to the cytoplasm. The catalysed reaction is L-citrulline + L-aspartate + ATP = 2-(N(omega)-L-arginino)succinate + AMP + diphosphate + H(+). It participates in amino-acid biosynthesis; L-arginine biosynthesis; L-arginine from L-ornithine and carbamoyl phosphate: step 2/3. The sequence is that of Argininosuccinate synthase from Deinococcus radiodurans (strain ATCC 13939 / DSM 20539 / JCM 16871 / CCUG 27074 / LMG 4051 / NBRC 15346 / NCIMB 9279 / VKM B-1422 / R1).